We begin with the raw amino-acid sequence, 167 residues long: Translationally-controlled tumor protein homolog (167 aa).

In terms of domain architecture, TCTP spans 1–167; the sequence is MKLFTDIISN…WKDGLRETKI (167 aa).

Belongs to the TCTP family.

The protein localises to the cytoplasm. It is found in the cytoskeleton. Functionally, involved in protein synthesis. Involved in microtubule stabilization. In Mycosarcoma maydis (Corn smut fungus), this protein is Translationally-controlled tumor protein homolog.